Reading from the N-terminus, the 397-residue chain is 2-aminoadipate transaminase (397 aa).

Position 40 (Gly-40) interacts with substrate. Pyridoxal 5'-phosphate contacts are provided by residues Tyr-70, Ser-100–Gln-101, Asn-174, Asp-202–Tyr-205, Ser-235–Ser-237, and Arg-245. Asn-174 serves as a coordination point for substrate. Residue Lys-263 is modified to N6-(pyridoxal phosphate)lysine. Arg-368 is a substrate binding site.

Belongs to the class-I pyridoxal-phosphate-dependent aminotransferase family. Homodimer. The cofactor is pyridoxal 5'-phosphate.

It carries out the reaction L-2-aminoadipate + 2-oxoglutarate = 2-oxoadipate + L-glutamate. It participates in amino-acid biosynthesis; L-lysine biosynthesis via AAA pathway; L-alpha-aminoadipate from 2-oxoglutarate: step 5/5. In terms of biological role, catalyzes the transfer of an amino group between 2-oxoadipate (2-OA) and glutamate (Glu) to yield alpha-aminodipate (AAA). It can also transaminate glutamate, leucine, and aromatic amino acids. It also contributes in the biosynthesis of other amino acids such as leucine. This is 2-aminoadipate transaminase (lysN) from Thermus thermophilus (strain ATCC BAA-163 / DSM 7039 / HB27).